The sequence spans 395 residues: MPRYCAAICCKNRRGRNNKDRKLSFYPFPLHDKERLEKWLKNMKRDSWVPSKYQFLCSDHFTPDSLDIRWGIRYLKQTAVPTIFSLPEDNQGKDPSKKKSQKKNLEDEKEVCPKAKSEESFVLNETKKNIVNTDVPHQHPELLHSSSLVKPPAPKTGSIQNNMLTLNLVKQHTGKPESTLETSVNQDTGRGGFHTCFENLNSTTITLTTSNSESIHQSLETQEVLEVTTSHLANPNFTSNSMEIKSAQENPFLFSTINQTVEELNTNKESVIAIFVPAENSKPSVNSFISAQKETTEMEDTDIEDSLYKDVDYGTEVLQIEHSYCRQDINKEHLWQKVSKLHSKITLLELKEQQTLGRLKSLEALIRQLKQENWLSEENVKIIENHFTTYEVTMI.

The THAP-type zinc-finger motif lies at 1-84 (MPRYCAAICC…LKQTAVPTIF (84 aa)). The tract at residues 85-112 (SLPEDNQGKDPSKKKSQKKNLEDEKEVC) is disordered. Residues 90 to 112 (NQGKDPSKKKSQKKNLEDEKEVC) show a composition bias toward basic and acidic residues. Residues 321-324 (EHSY) carry the HCFC1-binding motif (HBM) motif. The stretch at 348–382 (LELKEQQTLGRLKSLEALIRQLKQENWLSEENVKI) forms a coiled coil.

Interacts with HTRA2; under apoptotic conditions. Interacts with ABRAXAS2. Cleaved by HTRA2 during apoptosis. As to expression, detected in heart. Detected in brain and muscle (at protein level). Highly expressed in the heart. Also found in brain and skeletal muscle.

Its subcellular location is the nucleus. Its function is as follows. Has sequence-specific DNA-binding activity and can function as transcriptional repressor (in vitro). May be a regulator of cell cycle: THAP5 overexpression in human cell lines causes cell cycle arrest at G2/M phase. The chain is THAP domain-containing protein 5 (THAP5) from Homo sapiens (Human).